The sequence spans 758 residues: Zinc finger protein VAR3, chloroplastic (758 aa).

A 3 X approximate repeat region spans residues 122-502 (FPGFPDELLR…PKEETQIGLI (381 aa)). RanBP2-type zinc fingers lie at residues 276-305 (KRGD…ARPK) and 308-338 (LTGS…KRPR). Repeat 1 spans residues 368–415 (RWLSKVAQGGSDANSVDTDEDFPEIMPLRKGVNRYVVSTRKPPLERRL). Disordered regions lie at residues 410–470 (PLER…RFES), 512–545 (GGNQ…SEEP), 572–606 (EKMP…DSDF), 629–654 (TLPA…INKS), and 727–758 (KRKT…KGDK). Composition is skewed to basic and acidic residues over residues 457–469 (RSDD…RRFE), 519–545 (QEDK…SEEP), and 572–581 (EKMPMRKGEN). Repeat unit 2 spans residues 547-596 (RWFKRVTELHNVSDLESAIPQEISPEKMPMRKGENRFVVSRKKDRSLTSP). Residues 688–736 (RWFKRVAEIKNISELSEIPDEDFPSIMPMRKGVNRFVVSKRKTPLERRL) form repeat 3.

Interacts in vitro with the chloroplast-located protein CCD4/NCED4. Homodimer. Interacts with ORRM1. Interacts with PCMP-H51/CRR28 and PCMP-H12/OTP82. Interacts with ORRM6. As to expression, weakly expressed in leaves and roots.

It is found in the plastid. The protein localises to the chloroplast. Probable component of some protein complex required for chloroplast and palisade cell development. Involved in C-to-U editing of chloroplastic RNA. Controls a large number of chloroplastic editing sites. Binds the editing recognition trans-factors PCMP-H51/CRR28 and PCMP-H12/OTP82. This Arabidopsis thaliana (Mouse-ear cress) protein is Zinc finger protein VAR3, chloroplastic.